A 146-amino-acid polypeptide reads, in one-letter code: Large ribosomal subunit protein uL15 (146 aa).

Over residues 1 to 13 (MKLHELKPAEGSR) the composition is skewed to basic and acidic residues. The interval 1–57 (MKLHELKPAEGSRKVRNRVGRGTSSGNGKTSGRGQKGQKARSGVGLRPGFEGGQTPL) is disordered. Gly residues predominate over residues 23-35 (TSSGNGKTSGRGQ).

It belongs to the universal ribosomal protein uL15 family. In terms of assembly, part of the 50S ribosomal subunit.

Its function is as follows. Binds to the 23S rRNA. This Streptococcus thermophilus (strain ATCC BAA-491 / LMD-9) protein is Large ribosomal subunit protein uL15.